The chain runs to 237 residues: Phosphoribosylaminoimidazole-succinocarboxamide synthase (237 aa).

It belongs to the SAICAR synthetase family.

It carries out the reaction 5-amino-1-(5-phospho-D-ribosyl)imidazole-4-carboxylate + L-aspartate + ATP = (2S)-2-[5-amino-1-(5-phospho-beta-D-ribosyl)imidazole-4-carboxamido]succinate + ADP + phosphate + 2 H(+). The protein operates within purine metabolism; IMP biosynthesis via de novo pathway; 5-amino-1-(5-phospho-D-ribosyl)imidazole-4-carboxamide from 5-amino-1-(5-phospho-D-ribosyl)imidazole-4-carboxylate: step 1/2. The sequence is that of Phosphoribosylaminoimidazole-succinocarboxamide synthase from Listeria monocytogenes serotype 4b (strain CLIP80459).